The chain runs to 314 residues: Ribosomal protein L11 methyltransferase (314 aa).

S-adenosyl-L-methionine-binding residues include T163, G184, D206, and N248.

The protein belongs to the methyltransferase superfamily. PrmA family.

It localises to the cytoplasm. The catalysed reaction is L-lysyl-[protein] + 3 S-adenosyl-L-methionine = N(6),N(6),N(6)-trimethyl-L-lysyl-[protein] + 3 S-adenosyl-L-homocysteine + 3 H(+). In terms of biological role, methylates ribosomal protein L11. This chain is Ribosomal protein L11 methyltransferase, found in Lactobacillus acidophilus (strain ATCC 700396 / NCK56 / N2 / NCFM).